A 191-amino-acid chain; its full sequence is Protein GrpE (191 aa).

The segment covering 1–10 (MNHEEQKVET) has biased composition (basic and acidic residues). A disordered region spans residues 1–28 (MNHEEQKVETMEQVEAQPVEPTDVDSEV).

This sequence belongs to the GrpE family. Homodimer.

It localises to the cytoplasm. In terms of biological role, participates actively in the response to hyperosmotic and heat shock by preventing the aggregation of stress-denatured proteins, in association with DnaK and GrpE. It is the nucleotide exchange factor for DnaK and may function as a thermosensor. Unfolded proteins bind initially to DnaJ; upon interaction with the DnaJ-bound protein, DnaK hydrolyzes its bound ATP, resulting in the formation of a stable complex. GrpE releases ADP from DnaK; ATP binding to DnaK triggers the release of the substrate protein, thus completing the reaction cycle. Several rounds of ATP-dependent interactions between DnaJ, DnaK and GrpE are required for fully efficient folding. This Aeromonas salmonicida (strain A449) protein is Protein GrpE.